The primary structure comprises 150 residues: Deoxyuridine 5'-triphosphate nucleotidohydrolase (150 aa).

Residues 69-71 (RSG), asparagine 82, 86-88 (LID), and lysine 96 contribute to the substrate site.

It belongs to the dUTPase family. Mg(2+) is required as a cofactor.

It catalyses the reaction dUTP + H2O = dUMP + diphosphate + H(+). It functions in the pathway pyrimidine metabolism; dUMP biosynthesis; dUMP from dCTP (dUTP route): step 2/2. In terms of biological role, this enzyme is involved in nucleotide metabolism: it produces dUMP, the immediate precursor of thymidine nucleotides and it decreases the intracellular concentration of dUTP so that uracil cannot be incorporated into DNA. This Neisseria meningitidis serogroup A / serotype 4A (strain DSM 15465 / Z2491) protein is Deoxyuridine 5'-triphosphate nucleotidohydrolase.